A 362-amino-acid chain; its full sequence is Beta-ketoacyl-[acyl-carrier-protein] synthase III 2 (362 aa).

Active-site residues include C113 and H251. Positions 252 to 256 are ACP-binding; that stretch reads QANIR. N281 is a catalytic residue.

The protein belongs to the thiolase-like superfamily. FabH family. In terms of assembly, homodimer.

It is found in the cytoplasm. It carries out the reaction malonyl-[ACP] + acetyl-CoA + H(+) = 3-oxobutanoyl-[ACP] + CO2 + CoA. It functions in the pathway lipid metabolism; fatty acid biosynthesis. Catalyzes the condensation reaction of fatty acid synthesis by the addition to an acyl acceptor of two carbons from malonyl-ACP. Catalyzes the first condensation reaction which initiates fatty acid synthesis and may therefore play a role in governing the total rate of fatty acid production. Possesses both acetoacetyl-ACP synthase and acetyl transacylase activities. Its substrate specificity determines the biosynthesis of branched-chain and/or straight-chain of fatty acids. The polypeptide is Beta-ketoacyl-[acyl-carrier-protein] synthase III 2 (Vibrio vulnificus (strain CMCP6)).